A 589-amino-acid chain; its full sequence is BTB/POZ domain and ankyrin repeat-containing protein NPR3 (589 aa).

Residues M1 to D25 are disordered. The span at P13–A22 shows a compositional bias: pro residues. Positions A52–P137 constitute a BTB domain. The C2HC NPR-type zinc-finger motif lies at A140–R154. Zn(2+)-binding residues include C143, C148, H150, and C153. ANK repeat units follow at residues K260–D290, F292–L319, and S323–E352. The interval E382–T521 is salicylic acid-binding core (SBC). R433 contacts salicylate. Residues D555 to R589 form a disordered region. A compositionally biased stretch (low complexity) spans A558 to S571. The span at P580–R589 shows a compositional bias: basic residues.

It belongs to the plant 'ANKYRIN-BTB/POZ' family. 'NPR1-like' subfamily. As to quaternary structure, interacts with TGA2.1, TGA2.2, TGA2.3, LG2, TGAL1, TGAL4, NRR, RH1, RH2 and RH3.

It localises to the nucleus. It functions in the pathway protein modification; protein ubiquitination. Salicylic acid (SA)-binding substrate-specific adapter of an E3 ubiquitin-protein ligase complex (CUL3-RBX1-BTB) which mediates the ubiquitination and subsequent proteasomal degradation of target proteins. Involved in defense response against the bacterial blight disease caused by Xanthomonas oryzae pv. oryzae (Xoo). Plants expressing an NPR3/NH3 transgene driven by its native promoter show enhanced resistance to the Xoo pathogen, and exhibit elevated sensitivity to benzothiadiazole (BTH) treatment and enhanced induction of defense-related genes upon treatment with BTH. Intriguingly, constitutive over-expression of NPR3/NH3 with a ubiquitin promoter does not confer disease resistance to Xoo. The sequence is that of BTB/POZ domain and ankyrin repeat-containing protein NPR3 from Oryza sativa subsp. japonica (Rice).